The sequence spans 859 residues: Heat shock protein 105 kDa (859 aa).

Serine 2 bears the N-acetylserine mark. Lysine 471 carries the N6-acetyllysine modification. A phosphoserine mark is found at serine 509 and serine 510. Disordered stretches follow at residues 515 to 585 (MDCQ…PPEA) and 797 to 859 (CEPV…MDLD). The segment covering 533–555 (QQDNNEAGTQPQVQTDGHQTSQS) has biased composition (polar residues). Serine 558 bears the Phosphoserine mark. A Phosphothreonine modification is found at threonine 562. Basic and acidic residues-rich tracts occupy residues 564 to 585 (EENK…PPEA) and 806 to 815 (PKIESPKLER). At serine 810 the chain carries Phosphoserine. Residue threonine 816 is modified to Phosphothreonine. Positions 822–831 (TDKKEEDLDG) are enriched in basic and acidic residues. Polar residues predominate over residues 850 to 859 (EKSSINMDLD).

Belongs to the heat shock protein 70 family. As to quaternary structure, interacts with HSPA8/HSC70. Interacts with HSPA1A (via NBD) and HSPA1B (via NBD). Phosphorylation on Ser-509 may be important for regulation of the HSPA8/HSC70 chaperone activity.

Its subcellular location is the cytoplasm. Functionally, acts as a nucleotide-exchange factor (NEF) for chaperone proteins HSPA1A and HSPA1B, promoting the release of ADP from HSPA1A/B thereby triggering substrate release. Prevents the aggregation of denatured proteins in cells under severe stress, on which the ATP levels decrease markedly. Inhibits HSPA8/HSC70 ATPase and chaperone activities. In Bos taurus (Bovine), this protein is Heat shock protein 105 kDa (HSPH1).